The following is a 341-amino-acid chain: Phosphoribosylformylglycinamidine cyclo-ligase (341 aa).

This sequence belongs to the AIR synthase family.

Its subcellular location is the cytoplasm. The enzyme catalyses 2-formamido-N(1)-(5-O-phospho-beta-D-ribosyl)acetamidine + ATP = 5-amino-1-(5-phospho-beta-D-ribosyl)imidazole + ADP + phosphate + H(+). Its pathway is purine metabolism; IMP biosynthesis via de novo pathway; 5-amino-1-(5-phospho-D-ribosyl)imidazole from N(2)-formyl-N(1)-(5-phospho-D-ribosyl)glycinamide: step 2/2. This chain is Phosphoribosylformylglycinamidine cyclo-ligase, found in Picosynechococcus sp. (strain ATCC 27264 / PCC 7002 / PR-6) (Agmenellum quadruplicatum).